A 395-amino-acid polypeptide reads, in one-letter code: Lipoyl synthase, mitochondrial (395 aa).

The N-terminal 24 residues, 1–24 (MVKLPSASRIRSLATVPSTATRAF), are a transit peptide targeting the mitochondrion. Cysteine 107, cysteine 112, cysteine 118, cysteine 137, cysteine 141, cysteine 144, and serine 357 together coordinate [4Fe-4S] cluster. The Radical SAM core domain maps to 122 to 346 (GKGNATATIM…KNVAEGMGFL (225 aa)).

It belongs to the radical SAM superfamily. Lipoyl synthase family. It depends on [4Fe-4S] cluster as a cofactor.

It is found in the mitochondrion. It carries out the reaction [[Fe-S] cluster scaffold protein carrying a second [4Fe-4S](2+) cluster] + N(6)-octanoyl-L-lysyl-[protein] + 2 oxidized [2Fe-2S]-[ferredoxin] + 2 S-adenosyl-L-methionine + 4 H(+) = [[Fe-S] cluster scaffold protein] + N(6)-[(R)-dihydrolipoyl]-L-lysyl-[protein] + 4 Fe(3+) + 2 hydrogen sulfide + 2 5'-deoxyadenosine + 2 L-methionine + 2 reduced [2Fe-2S]-[ferredoxin]. It participates in protein modification; protein lipoylation via endogenous pathway; protein N(6)-(lipoyl)lysine from octanoyl-[acyl-carrier-protein]: step 2/2. Catalyzes the radical-mediated insertion of two sulfur atoms into the C-6 and C-8 positions of the octanoyl moiety bound to the lipoyl domains of lipoate-dependent enzymes, thereby converting the octanoylated domains into lipoylated derivatives. This Cryptococcus neoformans var. neoformans serotype D (strain B-3501A) (Filobasidiella neoformans) protein is Lipoyl synthase, mitochondrial.